Consider the following 253-residue polypeptide: 5'-nucleotidase SurE (253 aa).

Residues Asp-8, Asp-9, Ser-39, and Asn-95 each contribute to the a divalent metal cation site.

Belongs to the SurE nucleotidase family. It depends on a divalent metal cation as a cofactor.

It is found in the cytoplasm. The enzyme catalyses a ribonucleoside 5'-phosphate + H2O = a ribonucleoside + phosphate. Its function is as follows. Nucleotidase that shows phosphatase activity on nucleoside 5'-monophosphates. The protein is 5'-nucleotidase SurE of Desulfatibacillum aliphaticivorans.